The sequence spans 309 residues: Homoserine O-succinyltransferase (309 aa).

The active-site Acyl-thioester intermediate is the Cys-142. Substrate is bound by residues Lys-163 and Ser-192. His-235 serves as the catalytic Proton acceptor. Glu-237 is a catalytic residue. Arg-249 provides a ligand contact to substrate.

The protein belongs to the MetA family.

The protein resides in the cytoplasm. It carries out the reaction L-homoserine + succinyl-CoA = O-succinyl-L-homoserine + CoA. Its pathway is amino-acid biosynthesis; L-methionine biosynthesis via de novo pathway; O-succinyl-L-homoserine from L-homoserine: step 1/1. Its function is as follows. Transfers a succinyl group from succinyl-CoA to L-homoserine, forming succinyl-L-homoserine. The chain is Homoserine O-succinyltransferase from Klebsiella pneumoniae (strain 342).